The sequence spans 84 residues: Beta-mammal toxin Cn2 (84 aa).

The first 16 residues, 1-16, serve as a signal peptide directing secretion; the sequence is LLIITACLALIGTVWA. An LCN-type CS-alpha/beta domain is found at 17-82; the sequence is KEGYLVDKNT…VWPLPNKRCS (66 aa). 4 cysteine pairs are disulfide-bonded: Cys-28-Cys-81, Cys-32-Cys-57, Cys-41-Cys-62, and Cys-45-Cys-64. Ser-82 is modified (serine amide).

This sequence belongs to the long (4 C-C) scorpion toxin superfamily. Sodium channel inhibitor family. Beta subfamily. As to expression, expressed by the venom gland.

It localises to the secreted. Functionally, mammal beta-toxins bind voltage-independently at site-4 of sodium channels (Nav) and shift the activation voltage to more negative potentials. This toxin is active against mammals. This is Beta-mammal toxin Cn2 from Centruroides noxius (Mexican scorpion).